Reading from the N-terminus, the 381-residue chain is Protein TRIGALACTOSYLDIACYLGLYCEROL 2, chloroplastic (381 aa).

The N-terminal 45 residues, 1–45 (MIGNPVIQVPSSLMPSSSMIACPRVSPNGVPYLPPKPRTRHLVVR), are a transit peptide targeting the chloroplast. Topologically, residues 46 to 96 (AASNSDAAHGQPSSDGGKNPLTVVLDVPRNIWRQTLKPLSDFGFGKRSIWE) are stromal. A helical transmembrane segment spans residues 97–117 (GGVGLFIVSGATLLALSWAWL). The Chloroplast intermembrane segment spans residues 118 to 381 (RGFQMRSKFR…LLIKSLSRLL (264 aa)).

As to quaternary structure, homomultimer. Substrate-binding subunit of the TGD complex, a lipid translocator at the inner chloroplast envelope membrane made of TGD1, TGD2 and TGD3. Interacts with TGD1 and TGD3 with an overall subunit stoichiometry of 2 TGD1, 2 TGD3 and 8 to 12 TGD2. Interacts with TGD5.

It localises to the plastid. The protein resides in the chloroplast inner membrane. In terms of biological role, component of a phosphatidic acid/lipid transport complex in the chloroplast envelope. Specifically binds phosphatidic acid (PA). Involved in lipid transfer from the endoplasmic reticulum (ER) to plastids, and necessary for thylakoids formation. The protein is Protein TRIGALACTOSYLDIACYLGLYCEROL 2, chloroplastic of Arabidopsis thaliana (Mouse-ear cress).